Consider the following 112-residue polypeptide: UPF0145 protein CD630_17110 (112 aa).

This sequence belongs to the UPF0145 family.

The protein is UPF0145 protein CD630_17110 of Clostridioides difficile (strain 630) (Peptoclostridium difficile).